The sequence spans 415 residues: Lysosome-associated membrane glycoprotein 2 (415 aa).

Residues Met1 to Ala25 form the signal peptide. The first lumenal domain stretch occupies residues Leu26–Asp188. The Lumenal portion of the chain corresponds to Leu26–Asn379. Asn29, Asn45, Asn54, Asn57, Asn97, Asn115, and Asn175 each carry an N-linked (GlcNAc...) asparagine glycan. Cysteines 37 and 75 form a disulfide. Cys149 and Cys185 are joined by a disulfide. The hinge stretch occupies residues Gln189–Gly233. A compositionally biased stretch (low complexity) spans Ala202 to Ser213. The segment at Ala202–Asn227 is disordered. 9 N-linked (GlcNAc...) asparagine glycosylation sites follow: Asn227, Asn234, Asn247, Asn265, Asn280, Asn312, Asn317, Asn322, and Asn361. Residues Asn234–Asn379 are second lumenal domain. A disulfide bond links Cys237 and Cys270. The cysteines at positions 336 and 373 are disulfide-linked. The chain crosses the membrane as a helical span at residues Phe380–Gly404. Residues Leu405 to Phe415 are Cytoplasmic-facing. The important for binding and subsequent lysosomal degradation of target proteins stretch occupies residues Lys406–His409.

It belongs to the LAMP family. In terms of assembly, monomer. Forms large homooligomers. Interacts (via its cytoplasmic region) with HSPA8; HSPA8 mediates recruitment of proteins with a KFERQ motif to the surface of the lysosome for chaperone-mediated autophagy. Interacts with HSP90 in the lysosome lumen; this enhances LAMP2 stability. Interacts with MLLT11. Interacts with ABCB9. Interacts with FURIN. Interacts with CT55; this interaction may be important for LAMP2 protein stability. Interacts with TMEM175; inhibiting the proton channel activity of TMEM175. Forms a ternary complex with RAB7A and RUFY4 (via RUN domain); the interaction with RAB7A is mediated by RUFY4 (via RUN and coiled coil domains). Extensively N-glycosylated. Contains a minor proportion of O-linked glycans. Detected in liver and kidney (at protein level). Detected in liver and kidney.

The protein localises to the lysosome membrane. The protein resides in the endosome membrane. Its subcellular location is the cytoplasmic vesicle. It localises to the autophagosome membrane. It is found in the cell membrane. Lysosomal membrane glycoprotein which plays an important role in lysosome biogenesis, lysosomal pH regulation and autophagy. Acts as an important regulator of lysosomal lumen pH regulation by acting as a direct inhibitor of the proton channel TMEM175, facilitating lysosomal acidification for optimal hydrolase activity. Plays an important role in chaperone-mediated autophagy, a process that mediates lysosomal degradation of proteins in response to various stresses and as part of the normal turnover of proteins with a long biological half-live. Functions by binding target proteins, such as GAPDH, NLRP3 and MLLT11, and targeting them for lysosomal degradation. In the chaperone-mediated autophagy, acts downstream of chaperones, such as HSPA8/HSC70, which recognize and bind substrate proteins and mediate their recruitment to lysosomes, where target proteins bind LAMP2. Plays a role in lysosomal protein degradation in response to starvation. Required for the fusion of autophagosomes with lysosomes during autophagy. Cells that lack LAMP2 express normal levels of VAMP8, but fail to accumulate STX17 on autophagosomes, which is the most likely explanation for the lack of fusion between autophagosomes and lysosomes. Required for normal degradation of the contents of autophagosomes. Required for efficient MHC class II-mediated presentation of exogenous antigens via its function in lysosomal protein degradation; antigenic peptides generated by proteases in the endosomal/lysosomal compartment are captured by nascent MHC II subunits. Is not required for efficient MHC class II-mediated presentation of endogenous antigens. The protein is Lysosome-associated membrane glycoprotein 2 (Lamp2) of Mus musculus (Mouse).